Reading from the N-terminus, the 725-residue chain is Ophiobolin F synthase (725 aa).

Positions 1–322 (MEYKYSTIVD…RYHADAKFNE (322 aa)) are (7Z)-ophiobola-7,19-dien-3-ol synthase. Aspartate 93 and aspartate 97 together coordinate Mg(2+). A substrate-binding site is contributed by aspartate 93. The DDXXD 1 motif lies at 93-97 (DDEID). Substrate-binding positions include 182 to 185 (RCMD), asparagine 226, 230 to 234 (SYEKE), and 313 to 314 (RY). Residues 226 to 234 (NDLFSYEKE) carry the NSE/DTE motif. The tract at residues 323 to 725 (LQMLRAEHGV…LRMMLELLKV (403 aa)) is geranylfarnesyl diphosphate synthase. A disordered region spans residues 362-388 (GVNGVNGKRKRSGEETADDARTNGNGI). A compositionally biased stretch (basic and acidic residues) spans 373–382 (SGEETADDAR). Lysine 436, arginine 439, and histidine 468 together coordinate isopentenyl diphosphate. Mg(2+) is bound by residues aspartate 475 and aspartate 479. The DDXXD 2 signature appears at 475–479 (DDIED). A dimethylallyl diphosphate-binding site is contributed by arginine 484. Arginine 485 serves as a coordination point for isopentenyl diphosphate. The dimethylallyl diphosphate site is built by lysine 562, threonine 563, glutamine 601, asparagine 608, lysine 618, and lysine 628.

The protein in the N-terminal section; belongs to the terpene synthase family. It in the C-terminal section; belongs to the FPP/GGPP synthase family. It depends on Mg(2+) as a cofactor.

The enzyme catalyses isopentenyl diphosphate + (2E,6E)-farnesyl diphosphate = (2E,6E,10E)-geranylgeranyl diphosphate + diphosphate. It catalyses the reaction isopentenyl diphosphate + (2E,6E,10E)-geranylgeranyl diphosphate = (2E,6E,10E,14E)-geranylfarnesyl diphosphate + diphosphate. It carries out the reaction (2E,6E,10E,14E)-geranylfarnesyl diphosphate + H2O = ophiobolin F + diphosphate. Its pathway is secondary metabolite biosynthesis; terpenoid biosynthesis. In terms of biological role, bifunctional sesterterpene synthase that converts isopentenyl diphosphate (IPP) and dimethylallyl diphosphate (DMAPP) into ophiobolin F. The C-terminal prenyltransferase (PT) domain of AcldOS converts isopentenyl diphosphate and dimethylallyl diphosphate into geranylfarnesyl diphosphate (GFPP), whereas the N-terminal terpene cyclase (TC) domain catalyzes the cyclization of GFPP to ophiobolin F. The protein is Ophiobolin F synthase of Aspergillus calidoustus.